The sequence spans 31 residues: Spectrin beta chain, non-erythrocytic 1 (31 aa).

Spectrin repeat units lie at residues 1 to 10 (VLLLSQDYGK), 11 to 19 (YKEVAELTR), and 20 to 31 (TQILAASYELHK). Tyrosine 27 is subject to Phosphotyrosine.

This sequence belongs to the spectrin family. As to quaternary structure, interacts with ANK2. Interacts with CPNE4 (via VWFA domain). Like erythrocyte spectrin, the spectrin-like proteins are capable to form dimers which can further associate to tetramers. Associates with the gamma-tubulin complex in brain, but not in kidney, liver, sperm, or uterus. Interacts with CAMSAP1. Can form heterodimers with SPTAN1.

The protein localises to the cytoplasm. The protein resides in the cytoskeleton. Its subcellular location is the myofibril. It is found in the sarcomere. It localises to the m line. The protein localises to the cytosol. The protein resides in the cell membrane. In terms of biological role, fodrin, which seems to be involved in secretion, interacts with calmodulin in a calcium-dependent manner and is thus candidate for the calcium-dependent movement of the cytoskeleton at the membrane. Plays a critical role in central nervous system development and function. This is Spectrin beta chain, non-erythrocytic 1 (SPTBN1) from Capra hircus (Goat).